The following is a 127-amino-acid chain: Glycine cleavage system H protein 1 (127 aa).

Positions 20–101 (SVTVGITPYA…LGAGWFFRFI (82 aa)) constitute a Lipoyl-binding domain. Lysine 60 bears the N6-lipoyllysine mark.

The protein belongs to the GcvH family. In terms of assembly, the glycine cleavage system is composed of four proteins: P, T, L and H. It depends on (R)-lipoate as a cofactor.

Its function is as follows. The glycine cleavage system catalyzes the degradation of glycine. The H protein shuttles the methylamine group of glycine from the P protein to the T protein. This is Glycine cleavage system H protein 1 from Pseudomonas syringae pv. tomato (strain ATCC BAA-871 / DC3000).